Here is a 93-residue protein sequence, read N- to C-terminus: Large ribosomal subunit protein uL23cz/uL23cy (93 aa).

It belongs to the universal ribosomal protein uL23 family. As to quaternary structure, part of the 50S ribosomal subunit.

The protein localises to the plastid. It localises to the chloroplast. Functionally, binds to 23S rRNA. The protein is Large ribosomal subunit protein uL23cz/uL23cy (rpl23-A) of Cucumis sativus (Cucumber).